We begin with the raw amino-acid sequence, 439 residues long: GTPase Der (439 aa).

EngA-type G domains are found at residues 3-167 and 176-351; these read PLVA…PKSS and TRIA…AQYS. Residues 9–16, 56–60, 119–122, 182–189, 229–233, and 294–297 each bind GTP; these read GRPNVGKS, DTGGF, NKVD, DTAGI, and NKWD. The 85-residue stretch at 352–436 folds into the KH-like domain; sequence KRVSTSDLNR…PLKIIFRGRD (85 aa).

This sequence belongs to the TRAFAC class TrmE-Era-EngA-EngB-Septin-like GTPase superfamily. EngA (Der) GTPase family. In terms of assembly, associates with the 50S ribosomal subunit.

Its function is as follows. GTPase that plays an essential role in the late steps of ribosome biogenesis. The polypeptide is GTPase Der (Geobacter metallireducens (strain ATCC 53774 / DSM 7210 / GS-15)).